Here is a 161-residue protein sequence, read N- to C-terminus: Phosphopantetheine adenylyltransferase (161 aa).

Residue serine 11 participates in substrate binding. ATP is bound by residues 11–12 (SF) and histidine 19. Substrate-binding residues include lysine 43, leucine 75, and arginine 89. Residues 90–92 (GLR), glutamate 100, and 125–131 (YSYLSSS) contribute to the ATP site.

It belongs to the bacterial CoaD family. In terms of assembly, homohexamer. Mg(2+) serves as cofactor.

It is found in the cytoplasm. It catalyses the reaction (R)-4'-phosphopantetheine + ATP + H(+) = 3'-dephospho-CoA + diphosphate. It functions in the pathway cofactor biosynthesis; coenzyme A biosynthesis; CoA from (R)-pantothenate: step 4/5. Reversibly transfers an adenylyl group from ATP to 4'-phosphopantetheine, yielding dephospho-CoA (dPCoA) and pyrophosphate. This chain is Phosphopantetheine adenylyltransferase, found in Geotalea daltonii (strain DSM 22248 / JCM 15807 / FRC-32) (Geobacter daltonii).